The chain runs to 195 residues: Nicotinamide riboside kinase 2 (195 aa).

An ATP-binding site is contributed by 9 to 17; it reads GVTNGGKTT. 2 residues coordinate Mg(2+): T16 and D35. The active-site Proton acceptor is D35. Residues 35-38 and 54-55 contribute to the substrate site; these read DDFF and WD. R130 provides a ligand contact to ATP. Substrate contacts are provided by residues R131 and 136–137; that span reads YM. ATP contacts are provided by residues 134-136 and 174-176; these read RTY and KSP.

This sequence belongs to the uridine kinase family. NRK subfamily. In terms of assembly, monomer. Interacts with ITGB1 alone or when associated with alpha-7, but not with alpha-5. In terms of tissue distribution, expressed in skeletal muscle (at protein level).

The enzyme catalyses beta-nicotinamide D-riboside + ATP = beta-nicotinamide D-ribonucleotide + ADP + H(+). It carries out the reaction beta-D-ribosylnicotinate + ATP = nicotinate beta-D-ribonucleotide + ADP + H(+). Its pathway is cofactor biosynthesis; NAD(+) biosynthesis. Functionally, catalyzes the phosphorylation of nicotinamide riboside (NR) and nicotinic acid riboside (NaR) to form nicotinamide mononucleotide (NMN) and nicotinic acid mononucleotide (NaMN). Reduces laminin matrix deposition and cell adhesion to laminin, but not to fibronectin. Involved in the regulation of PXN at the protein level and of PXN tyrosine phosphorylation. May play a role in the regulation of terminal myogenesis. In Mus musculus (Mouse), this protein is Nicotinamide riboside kinase 2 (Nmrk2).